Consider the following 179-residue polypeptide: Peptide deformylase 2 (179 aa).

Fe cation contacts are provided by C102 and H144. Residue E145 is part of the active site. H148 contributes to the Fe cation binding site.

This sequence belongs to the polypeptide deformylase family. The cofactor is Fe(2+).

The catalysed reaction is N-terminal N-formyl-L-methionyl-[peptide] + H2O = N-terminal L-methionyl-[peptide] + formate. In terms of biological role, removes the formyl group from the N-terminal Met of newly synthesized proteins. Requires at least a dipeptide for an efficient rate of reaction. N-terminal L-methionine is a prerequisite for activity but the enzyme has broad specificity at other positions. In Nostoc sp. (strain PCC 7120 / SAG 25.82 / UTEX 2576), this protein is Peptide deformylase 2.